A 242-amino-acid chain; its full sequence is Sugar fermentation stimulation protein homolog (242 aa).

Belongs to the SfsA family.

In Enterococcus mundtii, this protein is Sugar fermentation stimulation protein homolog.